A 1408-amino-acid polypeptide reads, in one-letter code: ABC transporter B family member 20 (1408 aa).

The disordered stretch occupies residues 14–49; that stretch reads HMQPLTPVSEVSEPPESPSPYLDPGAESGGGTGTAA. Positions 20-39 are enriched in low complexity; the sequence is PVSEVSEPPESPSPYLDPGA. Residues 86 to 106 form a helical membrane-spanning segment; the sequence is VLMIVGSVAAAAHGTALIVYL. Residues 88 to 381 enclose the ABC transmembrane type-1 1 domain; sequence MIVGSVAAAA…AATNFYSFDQ (294 aa). Asparagine 120 is a glycosylation site (N-linked (GlcNAc...) asparagine). Transmembrane regions (helical) follow at residues 141 to 161, 214 to 233, and 238 to 260; these read IVYI…CWIL, VGNY…IGFV, and IALI…NIFL. Asparagine 293 carries N-linked (GlcNAc...) asparagine glycosylation. A run of 2 helical transmembrane segments spans residues 312 to 332 and 353 to 373; these read GILI…LAIC and GEII…NQAA. An ABC transporter 1 domain is found at 414 to 649; it reads IEFRNVYFSY…GGLYAELLKC (236 aa). 449-456 contacts ATP; sequence GRNGSGKS. The N-linked (GlcNAc...) asparagine glycan is linked to asparagine 451. Disordered stretches follow at residues 676-735 and 752-816; these read SSAG…SLDC and LPHL…DAQH. The span at 762–771 shows a compositional bias: polar residues; the sequence is CPQQKSNGSE. A glycan (N-linked (GlcNAc...) asparagine) is linked at asparagine 768. The segment covering 802 to 816 has biased composition (basic and acidic residues); sequence DDTKANGKASKDAQH. Positions 836–1124 constitute an ABC transmembrane type-1 2 domain; sequence AVLGSLGAAI…PFGLAPYILK (289 aa). 6 consecutive transmembrane segments (helical) span residues 841–861, 881–901, 959–979, 983–1003, 1062–1082, and 1103–1123; these read LGAA…ALVV, LIIA…HFYF, IFIQ…LLGW, LVAL…KLWL, IGFA…LLLW, and MVFS…PYIL. Residues 1159 to 1396 enclose the ABC transporter 2 domain; sequence IELKNVDFCY…NGLYVRLMQP (238 aa). Residue asparagine 1179 is glycosylated (N-linked (GlcNAc...) asparagine). ATP is bound at residue 1194-1201; that stretch reads GVSGSGKS. Asparagine 1261 and asparagine 1347 each carry an N-linked (GlcNAc...) asparagine glycan.

Belongs to the ABC transporter superfamily. ABCB family. Multidrug resistance exporter (TC 3.A.1.201) subfamily. As to expression, expressed in aerial tissues.

It localises to the membrane. It catalyses the reaction (indol-3-yl)acetate(in) + ATP + H2O = (indol-3-yl)acetate(out) + ADP + phosphate + H(+). In terms of biological role, probable auxin efflux transporter that contributes, together with ABCB6 and in a FKBP42/TWD1-dependent manner, to the regulation of leaf position and morphology, internode distribution, roots development, and inflorescence organization, probably by modulating auxin repartition. This is ABC transporter B family member 20 from Arabidopsis thaliana (Mouse-ear cress).